A 1409-amino-acid chain; its full sequence is Inositol hexakisphosphate and diphosphoinositol-pentakisphosphate kinase 1 (1409 aa).

64-65 (KK) is a substrate binding site. ATP contacts are provided by residues Arg-145, Lys-198, His-205, Arg-224, 248 to 251 (EEFM), and 257 to 259 (DVK). 224–225 (RK) contacts substrate. Substrate is bound by residues Lys-259 and Arg-273. ATP is bound by residues Ser-275, Asp-320, and 332 to 334 (DVN). 337-340 (SFVK) contacts substrate. The interval 382 to 453 (PTTSGTMMEL…VLDITRLLLA (72 aa)) is polyphosphoinositide-binding domain. The segment at 891 to 996 (GVEEEGSAPA…PTEMKQSGLG (106 aa)) is disordered. A phosphoserine mark is found at Ser-920 and Ser-963. Positions 981-996 (FSSSRPPTEMKQSGLG) are enriched in polar residues. Ser-1013 and Ser-1049 each carry phosphoserine. The segment covering 1110 to 1119 (MHSSQASDNP) has biased composition (polar residues). The disordered stretch occupies residues 1110–1183 (MHSSQASDNP…PSLNSHVAEE (74 aa)). Residues Ser-1121 and Ser-1128 each carry the phosphoserine modification. A compositionally biased stretch (low complexity) spans 1144–1162 (SSGPSSTVSSAGPSSPTTV). The span at 1163-1178 (DGNSQFGFSDQPSLNS) shows a compositional bias: polar residues.

It belongs to the histidine acid phosphatase family. VIP1 subfamily.

It localises to the cytoplasm. The protein localises to the cytosol. It is found in the cell membrane. It carries out the reaction 1D-myo-inositol hexakisphosphate + ATP = 1-diphospho-1D-myo-inositol 2,3,4,5,6-pentakisphosphate + ADP. The enzyme catalyses 5-diphospho-1D-myo-inositol 1,2,3,4,6-pentakisphosphate + ATP + H(+) = 1,5-bis(diphospho)-1D-myo-inositol 2,3,4,6-tetrakisphosphate + ADP. Its function is as follows. Bifunctional inositol kinase that acts in concert with the IP6K kinases IP6K1, IP6K2 and IP6K3 to synthesize the diphosphate group-containing inositol pyrophosphates diphosphoinositol pentakisphosphate, PP-InsP5, and bis-diphosphoinositol tetrakisphosphate, (PP)2-InsP4. PP-InsP5 and (PP)2-InsP4, also respectively called InsP7 and InsP8, regulate a variety of cellular processes, including apoptosis, vesicle trafficking, cytoskeletal dynamics, exocytosis, insulin signaling and neutrophil activation. Phosphorylates inositol hexakisphosphate (InsP6) at position 1 to produce PP-InsP5 which is in turn phosphorylated by IP6Ks to produce (PP)2-InsP4. Alternatively, phosphorylates PP-InsP5 at position 1, produced by IP6Ks from InsP6, to produce (PP)2-InsP4. Activated when cells are exposed to hyperosmotic stress. This is Inositol hexakisphosphate and diphosphoinositol-pentakisphosphate kinase 1 from Pongo abelii (Sumatran orangutan).